The primary structure comprises 353 residues: Thiamine-phosphate synthase (353 aa).

Residues 1-128 form a unknown region; that stretch reads MESMPVAPST…ARTAAAVRYA (128 aa). The thiamine-phosphate synthase stretch occupies residues 129–353; it reads LYDHEVRILE…ASRQLLDLLT (225 aa). 4-amino-2-methyl-5-(diphosphooxymethyl)pyrimidine-binding positions include 185–189 and asparagine 217; that span reads QYRRK. Residues aspartate 218 and aspartate 237 each coordinate Mg(2+). Serine 256 contacts 4-amino-2-methyl-5-(diphosphooxymethyl)pyrimidine. Residue 282-284 coordinates 2-[(2R,5Z)-2-carboxy-4-methylthiazol-5(2H)-ylidene]ethyl phosphate; it reads TAT. Lysine 285 serves as a coordination point for 4-amino-2-methyl-5-(diphosphooxymethyl)pyrimidine. 2-[(2R,5Z)-2-carboxy-4-methylthiazol-5(2H)-ylidene]ethyl phosphate-binding positions include glycine 312 and 332 to 333; that span reads VS.

This sequence belongs to the thiamine-phosphate synthase family. Mg(2+) serves as cofactor.

It catalyses the reaction 2-[(2R,5Z)-2-carboxy-4-methylthiazol-5(2H)-ylidene]ethyl phosphate + 4-amino-2-methyl-5-(diphosphooxymethyl)pyrimidine + 2 H(+) = thiamine phosphate + CO2 + diphosphate. It carries out the reaction 2-(2-carboxy-4-methylthiazol-5-yl)ethyl phosphate + 4-amino-2-methyl-5-(diphosphooxymethyl)pyrimidine + 2 H(+) = thiamine phosphate + CO2 + diphosphate. The catalysed reaction is 4-methyl-5-(2-phosphooxyethyl)-thiazole + 4-amino-2-methyl-5-(diphosphooxymethyl)pyrimidine + H(+) = thiamine phosphate + diphosphate. Its pathway is cofactor biosynthesis; thiamine diphosphate biosynthesis; thiamine phosphate from 4-amino-2-methyl-5-diphosphomethylpyrimidine and 4-methyl-5-(2-phosphoethyl)-thiazole: step 1/1. In terms of biological role, condenses 4-methyl-5-(beta-hydroxyethyl)thiazole monophosphate (THZ-P) and 2-methyl-4-amino-5-hydroxymethyl pyrimidine pyrophosphate (HMP-PP) to form thiamine monophosphate (TMP). This Synechococcus sp. (strain WH7803) protein is Thiamine-phosphate synthase.